The primary structure comprises 2570 residues: Stabilin-1 (2570 aa).

Residues 1–25 (MAGPRGLLPLCLLAFCLAGFSFVRG) form the signal peptide. Over 26–2478 (QVLFKGCDVK…LAPEAPPVAA (2453 aa)) the chain is Extracellular. EGF-like domains are found at residues 110–148 (HECP…SACQ), 156–193 (FGPD…PHCD), 195–229 (ELPV…QGSE), and 232–271 (APNP…MVCL). Disulfide bonds link Cys-112-Cys-126, Cys-120-Cys-136, Cys-138-Cys-147, Cys-160-Cys-171, Cys-164-Cys-181, Cys-183-Cys-192, Cys-199-Cys-210, Cys-204-Cys-217, Cys-236-Cys-247, Cys-241-Cys-257, and Cys-259-Cys-270. Asn-133 carries an N-linked (GlcNAc...) asparagine glycan. 7 N-linked (GlcNAc...) asparagine glycosylation sites follow: Asn-286, Asn-312, Asn-413, Asn-606, Asn-673, Asn-712, and Asn-745. 2 FAS1 domains span residues 356–494 (YGHL…TGLR) and 506–641 (KRTI…DGIL). The EGF-like 5 domain occupies 728–768 (DCTQCPGGFSNPCYGKGNCSDGIQGNGACLCFPDYKGIACH). Intrachain disulfides connect Cys-732-Cys-746, Cys-740-Cys-756, and Cys-758-Cys-767. N-linked (GlcNAc...) asparagine glycosylation is present at Asn-816. 4 EGF-like domains span residues 818-858 (SMGD…DGFS), 861-903 (PSNP…RVCV), 904-946 (AIDE…YQCS), and 947-986 (PIDP…DGFS). Cystine bridges form between Cys-822–Cys-837, Cys-831–Cys-846, Cys-865–Cys-879, Cys-873–Cys-889, Cys-891–Cys-902, Cys-908–Cys-922, Cys-916–Cys-932, Cys-934–Cys-945, Cys-951–Cys-964, and Cys-958–Cys-974. FAS1 domains lie at 988–1118 (YGDI…SQVL) and 1128–1253 (GQGL…SGVL). Residues Asn-1087, Asn-1096, Asn-1170, Asn-1178, Asn-1222, and Asn-1274 are each glycosylated (N-linked (GlcNAc...) asparagine). A Laminin EGF-like 1 domain is found at 1327–1392 (TLCEPCPGGL…CDCAHGLCQE (66 aa)). Intrachain disulfides connect Cys-1332-Cys-1346, Cys-1340-Cys-1356, and Cys-1358-Cys-1367. The N-linked (GlcNAc...) asparagine glycan is linked to Asn-1378. Intrachain disulfides connect Cys-1379/Cys-1390, Cys-1383/Cys-1400, Cys-1402/Cys-1411, Cys-1420/Cys-1430, Cys-1424/Cys-1440, Cys-1442/Cys-1453, Cys-1459/Cys-1472, Cys-1466/Cys-1482, Cys-1484/Cys-1495, Cys-1501/Cys-1514, Cys-1508/Cys-1524, Cys-1526/Cys-1538, Cys-1544/Cys-1557, Cys-1551/Cys-1567, and Cys-1569/Cys-1581. 4 EGF-like domains span residues 1416–1454 (TSPQ…IFCS), 1455–1496 (EVDP…ELCQ), 1497–1539 (EINS…RTCE), and 1540–1582 (LLDP…LTCR). Asn-1471 carries N-linked (GlcNAc...) asparagine glycosylation. 2 FAS1 domains span residues 1582-1708 (RARV…DRVL) and 1724-1864 (PRRN…DQLL). N-linked (GlcNAc...) asparagine glycosylation is found at Asn-1626 and Asn-1727. Residues 1966–2031 (SECQACPGGP…RCTVHGRCDE (66 aa)) form the Laminin EGF-like 2 domain. 15 disulfides stabilise this stretch: Cys-1971-Cys-1985, Cys-1979-Cys-1995, Cys-1997-Cys-2006, Cys-2018-Cys-2029, Cys-2023-Cys-2039, Cys-2041-Cys-2050, Cys-2060-Cys-2070, Cys-2064-Cys-2076, Cys-2078-Cys-2089, Cys-2095-Cys-2108, Cys-2102-Cys-2117, Cys-2119-Cys-2130, Cys-2136-Cys-2150, Cys-2144-Cys-2160, and Cys-2162-Cys-2173. EGF-like domains follow at residues 2056–2090 (LQPV…RVCT), 2091–2131 (VADL…WSCR), and 2132–2174 (ARNP…LQCL). Asn-2107 is a glycosylation site (N-linked (GlcNAc...) asparagine). Residues 2206–2301 (RAGVFHLQAT…SERWDAYCFR (96 aa)) enclose the Link domain. N-linked (GlcNAc...) asparagine glycosylation is found at Asn-2222, Asn-2261, Asn-2290, Asn-2334, Asn-2347, Asn-2379, Asn-2393, Asn-2400, and Asn-2424. Disulfide bonds link Cys-2230-Cys-2299 and Cys-2254-Cys-2275. Residues 2322 to 2459 (NGKLLDVLAA…GIIHALASPL (138 aa)) enclose the FAS1 7 domain. A helical transmembrane segment spans residues 2479-2499 (GVGAVLAAGALLGLVAGALYL). Over 2500–2570 (RARGKPMGFG…PDTQRILTVK (71 aa)) the chain is Cytoplasmic.

Interacts with CHID1. In terms of tissue distribution, high levels found in spleen, lymph node, liver and placenta. Also expressed in endothelial cells.

It localises to the membrane. In terms of biological role, acts as a scavenger receptor for acetylated low density lipoprotein. Binds to both Gram-positive and Gram-negative bacteria and may play a role in defense against bacterial infection. When inhibited in endothelial tube formation assays, there is a marked decrease in cell-cell interactions, suggesting a role in angiogenesis. Involved in the delivery of newly synthesized CHID1/SI-CLP from the biosynthetic compartment to the endosomal/lysosomal system. This Homo sapiens (Human) protein is Stabilin-1 (STAB1).